Here is a 928-residue protein sequence, read N- to C-terminus: Isoleucine--tRNA ligase (928 aa).

Residues 57 to 67 (PFANGNIHMGH) carry the 'HIGH' region motif. Glu-552 contributes to the L-isoleucyl-5'-AMP binding site. A 'KMSKS' region motif is present at residues 593-597 (KMSKS). Lys-596 lines the ATP pocket. Cys-887, Cys-890, Cys-907, and Cys-910 together coordinate Zn(2+).

It belongs to the class-I aminoacyl-tRNA synthetase family. IleS type 1 subfamily. In terms of assembly, monomer. It depends on Zn(2+) as a cofactor.

The protein resides in the cytoplasm. It catalyses the reaction tRNA(Ile) + L-isoleucine + ATP = L-isoleucyl-tRNA(Ile) + AMP + diphosphate. Its function is as follows. Catalyzes the attachment of isoleucine to tRNA(Ile). As IleRS can inadvertently accommodate and process structurally similar amino acids such as valine, to avoid such errors it has two additional distinct tRNA(Ile)-dependent editing activities. One activity is designated as 'pretransfer' editing and involves the hydrolysis of activated Val-AMP. The other activity is designated 'posttransfer' editing and involves deacylation of mischarged Val-tRNA(Ile). The polypeptide is Isoleucine--tRNA ligase (Lacticaseibacillus paracasei (strain ATCC 334 / BCRC 17002 / CCUG 31169 / CIP 107868 / KCTC 3260 / NRRL B-441) (Lactobacillus paracasei)).